A 311-amino-acid chain; its full sequence is Methionyl-tRNA formyltransferase (311 aa).

110-113 (SLLP) serves as a coordination point for (6S)-5,6,7,8-tetrahydrofolate.

Belongs to the Fmt family.

The catalysed reaction is L-methionyl-tRNA(fMet) + (6R)-10-formyltetrahydrofolate = N-formyl-L-methionyl-tRNA(fMet) + (6S)-5,6,7,8-tetrahydrofolate + H(+). In terms of biological role, attaches a formyl group to the free amino group of methionyl-tRNA(fMet). The formyl group appears to play a dual role in the initiator identity of N-formylmethionyl-tRNA by promoting its recognition by IF2 and preventing the misappropriation of this tRNA by the elongation apparatus. This Streptococcus pneumoniae serotype 19F (strain G54) protein is Methionyl-tRNA formyltransferase.